A 268-amino-acid polypeptide reads, in one-letter code: Protein MSS18 (268 aa).

The protein to baculovirus occlusion-derived virus envelope protein E27 (ODV-E27).

It is found in the mitochondrion. Functionally, involved in splicing of intron aI5-beta of the mitochondrial COX1 transcript. The polypeptide is Protein MSS18 (MSS18) (Saccharomyces cerevisiae (strain ATCC 204508 / S288c) (Baker's yeast)).